Consider the following 437-residue polypeptide: ATP-dependent protease ATPase subunit HslU (437 aa).

ATP-binding positions include V18, G60 to E65, D250, E315, and R387.

Belongs to the ClpX chaperone family. HslU subfamily. As to quaternary structure, a double ring-shaped homohexamer of HslV is capped on each side by a ring-shaped HslU homohexamer. The assembly of the HslU/HslV complex is dependent on binding of ATP.

The protein resides in the cytoplasm. In terms of biological role, ATPase subunit of a proteasome-like degradation complex; this subunit has chaperone activity. The binding of ATP and its subsequent hydrolysis by HslU are essential for unfolding of protein substrates subsequently hydrolyzed by HslV. HslU recognizes the N-terminal part of its protein substrates and unfolds these before they are guided to HslV for hydrolysis. This is ATP-dependent protease ATPase subunit HslU from Methylorubrum extorquens (strain PA1) (Methylobacterium extorquens).